We begin with the raw amino-acid sequence, 148 residues long: Macrodomain Ter protein (148 aa).

It belongs to the MatP family. As to quaternary structure, homodimer.

It localises to the cytoplasm. Its function is as follows. Required for spatial organization of the terminus region of the chromosome (Ter macrodomain) during the cell cycle. Prevents early segregation of duplicated Ter macrodomains during cell division. Binds specifically to matS, which is a 13 bp signature motif repeated within the Ter macrodomain. The protein is Macrodomain Ter protein of Haemophilus influenzae (strain PittGG).